The following is a 166-amino-acid chain: Ureidoglycolate lyase (166 aa).

The protein belongs to the ureidoglycolate lyase family. In terms of assembly, homodimer. It depends on Ni(2+) as a cofactor.

The catalysed reaction is (S)-ureidoglycolate = urea + glyoxylate. Its pathway is nitrogen metabolism; (S)-allantoin degradation. Its function is as follows. Catalyzes the catabolism of the allantoin degradation intermediate (S)-ureidoglycolate, generating urea and glyoxylate. Involved in the utilization of allantoin as nitrogen source. The chain is Ureidoglycolate lyase from Azotobacter vinelandii (strain DJ / ATCC BAA-1303).